A 335-amino-acid chain; its full sequence is Tetraacyldisaccharide 4'-kinase (335 aa).

59–66 (TAGGNGKT) serves as a coordination point for ATP.

It belongs to the LpxK family.

The enzyme catalyses a lipid A disaccharide + ATP = a lipid IVA + ADP + H(+). It participates in glycolipid biosynthesis; lipid IV(A) biosynthesis; lipid IV(A) from (3R)-3-hydroxytetradecanoyl-[acyl-carrier-protein] and UDP-N-acetyl-alpha-D-glucosamine: step 6/6. Functionally, transfers the gamma-phosphate of ATP to the 4'-position of a tetraacyldisaccharide 1-phosphate intermediate (termed DS-1-P) to form tetraacyldisaccharide 1,4'-bis-phosphate (lipid IVA). This is Tetraacyldisaccharide 4'-kinase from Aliivibrio salmonicida (strain LFI1238) (Vibrio salmonicida (strain LFI1238)).